The sequence spans 182 residues: Crossover junction endodeoxyribonuclease RuvC (182 aa).

Residues Asp-7, Glu-69, and Asp-141 contribute to the active site. Mg(2+)-binding residues include Asp-7, Glu-69, and Asp-141.

Belongs to the RuvC family. In terms of assembly, homodimer which binds Holliday junction (HJ) DNA. The HJ becomes 2-fold symmetrical on binding to RuvC with unstacked arms; it has a different conformation from HJ DNA in complex with RuvA. In the full resolvosome a probable DNA-RuvA(4)-RuvB(12)-RuvC(2) complex forms which resolves the HJ. It depends on Mg(2+) as a cofactor.

It localises to the cytoplasm. It catalyses the reaction Endonucleolytic cleavage at a junction such as a reciprocal single-stranded crossover between two homologous DNA duplexes (Holliday junction).. The RuvA-RuvB-RuvC complex processes Holliday junction (HJ) DNA during genetic recombination and DNA repair. Endonuclease that resolves HJ intermediates. Cleaves cruciform DNA by making single-stranded nicks across the HJ at symmetrical positions within the homologous arms, yielding a 5'-phosphate and a 3'-hydroxyl group; requires a central core of homology in the junction. The consensus cleavage sequence is 5'-(A/T)TT(C/G)-3'. Cleavage occurs on the 3'-side of the TT dinucleotide at the point of strand exchange. HJ branch migration catalyzed by RuvA-RuvB allows RuvC to scan DNA until it finds its consensus sequence, where it cleaves and resolves the cruciform DNA. The chain is Crossover junction endodeoxyribonuclease RuvC from Delftia acidovorans (strain DSM 14801 / SPH-1).